Consider the following 698-residue polypeptide: DNA ligase (698 aa).

Residues 47 to 51 (DAQYD), 96 to 97 (SL), and glutamate 128 contribute to the NAD(+) site. The active-site N6-AMP-lysine intermediate is lysine 130. 4 residues coordinate NAD(+): arginine 151, glutamate 186, lysine 303, and lysine 327. Cysteine 422, cysteine 425, cysteine 440, and cysteine 446 together coordinate Zn(2+). The BRCT domain maps to 620–698 (GDNLLLSNQT…EEEWIKMVNE (79 aa)).

Belongs to the NAD-dependent DNA ligase family. LigA subfamily. Mg(2+) is required as a cofactor. Requires Mn(2+) as cofactor.

It catalyses the reaction NAD(+) + (deoxyribonucleotide)n-3'-hydroxyl + 5'-phospho-(deoxyribonucleotide)m = (deoxyribonucleotide)n+m + AMP + beta-nicotinamide D-nucleotide.. In terms of biological role, DNA ligase that catalyzes the formation of phosphodiester linkages between 5'-phosphoryl and 3'-hydroxyl groups in double-stranded DNA using NAD as a coenzyme and as the energy source for the reaction. It is essential for DNA replication and repair of damaged DNA. The protein is DNA ligase of Orientia tsutsugamushi (strain Boryong) (Rickettsia tsutsugamushi).